Consider the following 179-residue polypeptide: Large ribosomal subunit protein uL5c (179 aa).

Belongs to the universal ribosomal protein uL5 family. In terms of assembly, part of the 50S ribosomal subunit; contacts the 5S rRNA.

It localises to the plastid. Binds 5S rRNA, forms part of the central protuberance of the 50S subunit. In Euglena longa (Euglenophycean alga), this protein is Large ribosomal subunit protein uL5c (rpl5).